Consider the following 431-residue polypeptide: Serine hydroxymethyltransferase 3 (431 aa).

(6S)-5,6,7,8-tetrahydrofolate contacts are provided by residues Leu131 and 135–137 (GHL). An N6-(pyridoxal phosphate)lysine modification is found at Lys240.

Belongs to the SHMT family. In terms of assembly, homodimer. It depends on pyridoxal 5'-phosphate as a cofactor.

The protein resides in the cytoplasm. The catalysed reaction is (6R)-5,10-methylene-5,6,7,8-tetrahydrofolate + glycine + H2O = (6S)-5,6,7,8-tetrahydrofolate + L-serine. The protein operates within one-carbon metabolism; tetrahydrofolate interconversion. It participates in amino-acid biosynthesis; glycine biosynthesis; glycine from L-serine: step 1/1. Catalyzes the reversible interconversion of serine and glycine with tetrahydrofolate (THF) serving as the one-carbon carrier. This reaction serves as the major source of one-carbon groups required for the biosynthesis of purines, thymidylate, methionine, and other important biomolecules. Also exhibits THF-independent aldolase activity toward beta-hydroxyamino acids, producing glycine and aldehydes, via a retro-aldol mechanism. The polypeptide is Serine hydroxymethyltransferase 3 (Colwellia psychrerythraea (strain 34H / ATCC BAA-681) (Vibrio psychroerythus)).